Reading from the N-terminus, the 298-residue chain is MNALTLPDIARQTTTADLPLDWVGMQGIALPVQIGGQRVAAEADAGVSLDDPQARGIHMSRLYLALAELEQGELDLSRLRAVLQRFLDSHAGLSRRAYLRLRLAPLLRRPALVSPLSGWKRYPLVLDTRLEGDDFQAEVHLELTYSSTCPCSAALARQLIQERFDQDFAGQPLDHASVLAWLGSSAGIVATPHSQRSSAHLRIGLAEDCIGLPLEELADLGESALGTAVQTAVKRADEQAFALANGQNLMFCEDAVRRLHRALQGYPQASRFSIRVVHAESLHAHDAVAESHWQRGAA.

It belongs to the GTP cyclohydrolase IV family.

The enzyme catalyses GTP + H2O = 7,8-dihydroneopterin 3'-triphosphate + formate + H(+). It functions in the pathway cofactor biosynthesis; 7,8-dihydroneopterin triphosphate biosynthesis; 7,8-dihydroneopterin triphosphate from GTP: step 1/1. Converts GTP to 7,8-dihydroneopterin triphosphate. The protein is GTP cyclohydrolase FolE2 of Pseudomonas aeruginosa (strain UCBPP-PA14).